The sequence spans 82 residues: Acyl carrier protein (82 aa).

The 76-residue stretch at 4-79 (EKIFQELKNI…DVVDIIESNL (76 aa)) folds into the Carrier domain. The residue at position 39 (S39) is an O-(pantetheine 4'-phosphoryl)serine.

Belongs to the acyl carrier protein (ACP) family. In terms of processing, 4'-phosphopantetheine is transferred from CoA to a specific serine of apo-ACP by AcpS. This modification is essential for activity because fatty acids are bound in thioester linkage to the sulfhydryl of the prosthetic group.

Its subcellular location is the cytoplasm. Its pathway is lipid metabolism; fatty acid biosynthesis. In terms of biological role, carrier of the growing fatty acid chain in fatty acid biosynthesis. This is Acyl carrier protein from Coprothermobacter proteolyticus (strain ATCC 35245 / DSM 5265 / OCM 4 / BT).